The following is an 89-amino-acid chain: Small ribosomal subunit protein uS15 (89 aa).

The span at 1 to 21 (MAITQERKNQLINEFKTHESD) shows a compositional bias: basic and acidic residues. The tract at residues 1–24 (MAITQERKNQLINEFKTHESDTGS) is disordered.

The protein belongs to the universal ribosomal protein uS15 family. In terms of assembly, part of the 30S ribosomal subunit. Forms a bridge to the 50S subunit in the 70S ribosome, contacting the 23S rRNA.

In terms of biological role, one of the primary rRNA binding proteins, it binds directly to 16S rRNA where it helps nucleate assembly of the platform of the 30S subunit by binding and bridging several RNA helices of the 16S rRNA. Functionally, forms an intersubunit bridge (bridge B4) with the 23S rRNA of the 50S subunit in the ribosome. The polypeptide is Small ribosomal subunit protein uS15 (Bacillus subtilis (strain 168)).